The sequence spans 667 residues: Leucine aminopeptidase 2 (667 aa).

A peptide is bound by residues 188–190 and 318–323; these read QCQ and PYGGME. A Zn(2+)-binding site is contributed by His-347. Residue Glu-348 is the Proton acceptor of the active site. His-351 and Glu-370 together coordinate Zn(2+). The Proton donor role is filled by Tyr-436.

It belongs to the peptidase M1 family. Zn(2+) is required as a cofactor.

The protein localises to the cytoplasm. It is found in the nucleus. The enzyme catalyses an epoxide + H2O = an ethanediol. Its function is as follows. Aminopeptidase that preferentially cleaves di- and tripeptides. Also has low epoxide hydrolase activity (in vitro). Can hydrolyze the epoxide leukotriene LTA(4) but it forms preferentially 5,6-dihydroxy-7,9,11,14-eicosatetraenoic acid rather than the cytokine leukotriene B(4) as the product compared to the homologous mammalian enzyme (in vitro). The sequence is that of Leucine aminopeptidase 2 (ara-1) from Neurospora crassa (strain ATCC 24698 / 74-OR23-1A / CBS 708.71 / DSM 1257 / FGSC 987).